The following is a 77-amino-acid chain: ATP synthase subunit c (77 aa).

Helical transmembrane passes span 13–33 (IATV…GIVA) and 55–75 (FLGI…YFIF).

The protein belongs to the ATPase C chain family. In terms of assembly, F-type ATPases have 2 components, F(1) - the catalytic core - and F(0) - the membrane proton channel. F(1) has five subunits: alpha(3), beta(3), gamma(1), delta(1), epsilon(1). F(0) has three main subunits: a(1), b(2) and c(10-14). The alpha and beta chains form an alternating ring which encloses part of the gamma chain. F(1) is attached to F(0) by a central stalk formed by the gamma and epsilon chains, while a peripheral stalk is formed by the delta and b chains.

It localises to the cell membrane. Its function is as follows. F(1)F(0) ATP synthase produces ATP from ADP in the presence of a proton or sodium gradient. F-type ATPases consist of two structural domains, F(1) containing the extramembraneous catalytic core and F(0) containing the membrane proton channel, linked together by a central stalk and a peripheral stalk. During catalysis, ATP synthesis in the catalytic domain of F(1) is coupled via a rotary mechanism of the central stalk subunits to proton translocation. Key component of the F(0) channel; it plays a direct role in translocation across the membrane. A homomeric c-ring of between 10-14 subunits forms the central stalk rotor element with the F(1) delta and epsilon subunits. This Clavibacter michiganensis subsp. michiganensis (strain NCPPB 382) protein is ATP synthase subunit c.